The primary structure comprises 351 residues: Lipopolysaccharide core biosynthesis mannosyltransferase LpsB (351 aa).

This sequence belongs to the glycosyltransferase group 1 family. Glycosyltransferase 4 subfamily.

It participates in bacterial outer membrane biogenesis; LPS core biosynthesis. Acts at transfer of mannose group to a 3-deoxy-D-mono octulonic acid (KDO) via an alpha-1,5 linkage. The chain is Lipopolysaccharide core biosynthesis mannosyltransferase LpsB (lpsB) from Rhizobium meliloti (strain 1021) (Ensifer meliloti).